Consider the following 564-residue polypeptide: Mercuric reductase (564 aa).

Residues 1-65 (MSTLKITGMT…AVAGLGYRAT (65 aa)) enclose the HMA domain. Cys11 and Cys14 together coordinate a metal cation. The FAD site is built by Ala109, Gly129, and Thr134. A disulfide bridge links Cys135 with Cys140. 4 residues coordinate FAD: Lys144, Ala210, Asp406, and Val414. 2 residues coordinate Hg(2+): Cys561 and Cys562.

The protein belongs to the class-I pyridine nucleotide-disulfide oxidoreductase family. Homodimer. It depends on FAD as a cofactor.

The catalysed reaction is Hg + NADP(+) + H(+) = Hg(2+) + NADPH. Resistance to Hg(2+) in bacteria appears to be governed by a specialized system which includes mercuric reductase. MerA protein is responsible for volatilizing mercury as Hg(0). In Shigella flexneri, this protein is Mercuric reductase (merA).